The chain runs to 434 residues: N-acylneuraminate cytidylyltransferase (434 aa).

At Met-1 the chain carries N-acetylmethionine. Residues 1-42 (MDSVEKGAATSVSNPRGRPSRGRPPKLQRNSRGGQGRGVEKP) form a disordered region. A BC1 motif motif is present at residues 15 to 31 (PRGRPSRGRPPKLQRNS). 2 positions are modified to omega-N-methylarginine: Arg-37 and Arg-52. Residues Arg-52, Asn-62, Arg-111, Ser-120, Ser-122, and Gln-143 each coordinate substrate. Positions 200-206 (KRPRRQD) match the BC2 motif motif. The active site involves Arg-201. Residues 269–276 (KEKLKEIK) carry the BC3 motif motif.

The protein belongs to the CMP-NeuNAc synthase family. As to quaternary structure, homotetramer; the active enzyme is formed by a dimer of dimers. As to expression, ubiquitously expressed. Expressed in pancreas, kidney, liver, skeletal muscle, lung, placenta, brain, heart, colon, PBL, small intestine, ovary, testis, prostate, thymus and spleen.

It is found in the nucleus. It catalyses the reaction an N-acylneuraminate + CTP = a CMP-N-acyl-beta-neuraminate + diphosphate. It participates in amino-sugar metabolism; N-acetylneuraminate metabolism. Its function is as follows. Catalyzes the activation of N-acetylneuraminic acid (NeuNAc) to cytidine 5'-monophosphate N-acetylneuraminic acid (CMP-NeuNAc), a substrate required for the addition of sialic acid. Has some activity toward NeuNAc, N-glycolylneuraminic acid (Neu5Gc) or 2-keto-3-deoxy-D-glycero-D-galacto-nononic acid (KDN). In Homo sapiens (Human), this protein is N-acylneuraminate cytidylyltransferase (CMAS).